Reading from the N-terminus, the 520-residue chain is 2-isopropylmalate synthase (520 aa).

Residues 12–274 (VVIFDTTLRD…DTGIDTTMLT (263 aa)) form the Pyruvate carboxyltransferase domain. Residues D21, H209, H211, and N245 each contribute to the Mn(2+) site. Positions 398–520 (KLLSLSVIAG…RLHAQHAAVV (123 aa)) are regulatory domain.

It belongs to the alpha-IPM synthase/homocitrate synthase family. LeuA type 1 subfamily. In terms of assembly, homodimer. Requires Mn(2+) as cofactor.

It localises to the cytoplasm. It catalyses the reaction 3-methyl-2-oxobutanoate + acetyl-CoA + H2O = (2S)-2-isopropylmalate + CoA + H(+). Its pathway is amino-acid biosynthesis; L-leucine biosynthesis; L-leucine from 3-methyl-2-oxobutanoate: step 1/4. Functionally, catalyzes the condensation of the acetyl group of acetyl-CoA with 3-methyl-2-oxobutanoate (2-ketoisovalerate) to form 3-carboxy-3-hydroxy-4-methylpentanoate (2-isopropylmalate). The polypeptide is 2-isopropylmalate synthase (Methylorubrum populi (strain ATCC BAA-705 / NCIMB 13946 / BJ001) (Methylobacterium populi)).